The chain runs to 263 residues: Esterase mokD (263 aa).

Residues serine 134, aspartate 208, and histidine 236 each act as charge relay system in the active site.

Belongs to the LovG family.

The catalysed reaction is dihydromonacolin L-[lovastatin nonaketide synthase] + H2O = holo-[lovastatin nonaketide synthase] + dihydromonacolin L carboxylate + H(+). It functions in the pathway polyketide biosynthesis; lovastatin biosynthesis. In terms of biological role, esterase; part of the gene cluster that mediates the biosynthesis of monakolin K, also known as lovastatin, and which acts as a potent competitive inhibitor of HMG-CoA reductase. Monakolin K biosynthesis is performed in two stages. The first stage is catalyzed by the nonaketide synthase mokA, which belongs to type I polyketide synthases and catalyzes the iterative nine-step formation of the polyketide. This PKS stage completed by the action of dehydrogenase mokE, which catalyzes the NADPH-dependent reduction of the unsaturated tetra-, penta- and heptaketide intermediates that arise during the mokA-mediated biosynthesis of the nonaketide chain and leads to dihydromonacolin L. Covalently bound dihydromonacolin L is released from mokA by the mokD esterase. Conversion of dihydromonacolin L into monacolin L and then monacolin J is subsequently performed with the participation of molecular oxygen and P450 monoogygenase mokC. Finally, mokF performs the conversion of monacoline J to monacoline K through the addition of the side-chain diketide moiety (2R)-2-methylbutanoate produced by the diketide synthase mokB. This chain is Esterase mokD, found in Monascus pilosus (Red mold).